Reading from the N-terminus, the 731-residue chain is Cell death abnormality protein 12 (731 aa).

One can recognise an ELMO domain in the interval 339–485 (AEVQKILDIE…VVLEQLRHVL (147 aa)). A PH domain is found at 544 to 679 (VRINHLNYLK…WLEGLAELIG (136 aa)). An SH3-binding motif is present at residues 715–718 (PEIP).

As to quaternary structure, interacts with psr-1. Forms a ternary complex with ced-2 and ced-5.

The protein resides in the cytoplasm. Functionally, involved in programmed apoptosis and necrosis. Required for the cell corpse engulfment process. Has roles in the formation of actin halos and distal tip cell migration. Negatively regulates the unc-6/Netrin receptor unc-5 to control distal tip cell migration along the anterior-posterior axis of the body. Plays no role in amphid axon outgrowth. The protein is Cell death abnormality protein 12 of Caenorhabditis elegans.